Here is a 203-residue protein sequence, read N- to C-terminus: Glutathione S-transferase (203 aa).

The GST N-terminal domain maps to Pro-2–Gly-79. Residues Tyr-8, Trp-39, Lys-43, Gly-49–Met-51, and Gln-63–Ser-64 each bind glutathione. One can recognise a GST C-terminal domain in the interval Asp-81–Val-203.

Belongs to the GST superfamily. Sigma family. In terms of assembly, homodimer.

It catalyses the reaction RX + glutathione = an S-substituted glutathione + a halide anion + H(+). Conjugation of reduced glutathione to a wide number of exogenous and endogenous hydrophobic electrophiles. In Anopheles gambiae (African malaria mosquito), this protein is Glutathione S-transferase (GstS1).